Reading from the N-terminus, the 1165-residue chain is DNA-directed RNA polymerase III subunit RPC2 (1165 aa).

The segment at 1–21 (MGVNTAGDPQKSQPKINKGGI) is disordered. Residues C1111, C1114, C1123, and C1126 each coordinate Zn(2+). The segment at 1111 to 1126 (CGQCGLLGYKGWCNSC) adopts a C4-type zinc-finger fold.

It belongs to the RNA polymerase beta chain family. Component of the RNA polymerase III (Pol III) complex consisting of 17 subunits.

Its subcellular location is the nucleus. The catalysed reaction is RNA(n) + a ribonucleoside 5'-triphosphate = RNA(n+1) + diphosphate. In terms of biological role, DNA-dependent RNA polymerase catalyzes the transcription of DNA into RNA using the four ribonucleoside triphosphates as substrates. Second largest core component of RNA polymerase III which synthesizes small RNAs, such as 5S rRNA and tRNAs. Proposed to contribute to the polymerase catalytic activity and forms the polymerase active center together with the largest subunit. Pol III is composed of mobile elements and RPC2 is part of the core element with the central large cleft and probably a clamp element that moves to open and close the cleft. The polypeptide is DNA-directed RNA polymerase III subunit RPC2 (rpc2) (Schizosaccharomyces pombe (strain 972 / ATCC 24843) (Fission yeast)).